A 708-amino-acid chain; its full sequence is MDSSHNDSSSDEEGIDSNNRRHHSNHQVQRLEAFFHECPHPDDSQRRQLGNELNLKHKQIKFWFQNRRTQARIHNEKADNIALRVENMKIRCVNEAMEKALETVLCPPCGGPHGKEEQLCNLQKLRTKNVILKTEYERLSSYLTKHGGYSIPSVDALPDLHGPSTYGSTSNNRPASYGSSSNHLPQQSSLLRRPFTRELINTTPLPKPVLLQHFQQLSQLEKNRMFEIAKNAVAEVMSLIQMEHSMWIKSTIDGRAIIDPGNYKRYFTKNSHLKSRSALQSHHESSMEVVVVQMDARNLVDMFLNTEKWARLFPTIVTEAKTIHVLDSMDHPRQTFSRVVYEQLHILSPLVLPREFIILRTCQQMKEDLWLIADVSCYLQNVEFESTAPICTKRPSGVLIQALPHGRSKVTWIEHVEVTDKVWPHQLYRDLLYGGFGYGARRWTATLQRMCERLSLYSMTDFPPTDYPGVVKTIEGRRSVMSLGERMLKNFAWIMKMSDKLDLPQQSGANNSGVRISVRTNTEAGQPPGLIVCAGSSLSLPLPPLQVYDFLRNLEVRHQWDVHCQGNPVTEAARFVTGPDQKNNVTFLQPSSVGEYKLMILQDGFIDALGGMVVYAPMNLNTAYSAISGQVDPSTIPILPSGFIISRDSHPSSSEVDGGSMTLLTLAFQIFVTGPSYYTDLNLKDSATTVNTLVSSAVQRIKAMLNCE.

Residues 1–24 (MDSSHNDSSSDEEGIDSNNRRHHS) form a disordered region. Positions 16 to 75 (DSNNRRHHSNHQVQRLEAFFHECPHPDDSQRRQLGNELNLKHKQIKFWFQNRRTQARIHN) form a DNA-binding region, homeobox. Residues 119 to 141 (LCNLQKLRTKNVILKTEYERLSS) adopt a coiled-coil conformation. A disordered region spans residues 162–188 (GPSTYGSTSNNRPASYGSSSNHLPQQS). Positions 165–188 (TYGSTSNNRPASYGSSSNHLPQQS) are enriched in polar residues. The region spanning 218-456 (SQLEKNRMFE…LQRMCERLSL (239 aa)) is the START domain.

Belongs to the HD-ZIP homeobox family. Class IV subfamily. Interacts with ANT, BBM and AIL1. Expressed in exclusively in anthers with highest levels in the tapetum and pollen grains.

It is found in the nucleus. In terms of biological role, probable transcription factor. The chain is Homeobox-leucine zipper protein HDG10 from Arabidopsis thaliana (Mouse-ear cress).